The sequence spans 861 residues: DNA mismatch repair protein MutS (861 aa).

609–616 (GPNMAGKS) lines the ATP pocket.

This sequence belongs to the DNA mismatch repair MutS family.

This protein is involved in the repair of mismatches in DNA. It is possible that it carries out the mismatch recognition step. This protein has a weak ATPase activity. In Borrelia hermsii (strain HS1 / DAH), this protein is DNA mismatch repair protein MutS.